Here is a 316-residue protein sequence, read N- to C-terminus: Small kinetochore-associated protein (316 aa).

A Phosphoserine modification is found at Ser128. Positions 159–316 (VRKGYKPLSK…LKEMEQLLEM (158 aa)) are interaction with SPAG5. 2 coiled-coil regions span residues 166-216 (LSKQ…FRDN) and 248-316 (SMLL…LLEM).

In terms of assembly, part of an astrin (SPAG5)-kinastrin (SKAP) complex containing KNSTRN, SPAG5, PLK1, DYNLL1 and SGO2. Interacts with SPAG5. Directly binds to microtubules, although at relatively low affinity. Interacts with CENPE; this interaction greatly favors microtubule-binding. Interacts with DSN1/MIS13; leading to localization to kinetochores. Interacts with MAPRE1/EB1; leading to localization to the microtubule plus ends. Interacts with PRPF19. Interacts with DYNLL1. Interacts with MAP4. As to expression, widely expressed, including in skin.

The protein resides in the nucleus. It is found in the chromosome. The protein localises to the centromere. It localises to the kinetochore. Its subcellular location is the cytoplasm. The protein resides in the cytoskeleton. It is found in the spindle pole. The protein localises to the microtubule organizing center. Functionally, essential component of the mitotic spindle required for faithful chromosome segregation and progression into anaphase. Promotes the metaphase-to-anaphase transition and is required for chromosome alignment, normal timing of sister chromatid segregation, and maintenance of spindle pole architecture. The astrin (SPAG5)-kinastrin (SKAP) complex promotes stable microtubule-kinetochore attachments. Required for kinetochore oscillations and dynamics of microtubule plus-ends during live cell mitosis, possibly by forming a link between spindle microtubule plus-ends and mitotic chromosomes to achieve faithful cell division. May be involved in UV-induced apoptosis via its interaction with PRPF19; however, these results need additional evidences. The protein is Small kinetochore-associated protein of Homo sapiens (Human).